A 160-amino-acid chain; its full sequence is uncharacterized protein (160 aa).

A Phosphotyrosine modification is found at Tyr-49.

In terms of biological role, may be involved in the assembly, structure, or function of the flagellum. May polymerize to form a filamentous structure that is part of the flagellum. This is an uncharacterized protein from Bacillus subtilis (strain 168).